The primary structure comprises 354 residues: Protein RecA (354 aa).

67–74 lines the ATP pocket; that stretch reads GPESSGKT.

It belongs to the RecA family.

The protein resides in the cytoplasm. In terms of biological role, can catalyze the hydrolysis of ATP in the presence of single-stranded DNA, the ATP-dependent uptake of single-stranded DNA by duplex DNA, and the ATP-dependent hybridization of homologous single-stranded DNAs. It interacts with LexA causing its activation and leading to its autocatalytic cleavage. The sequence is that of Protein RecA from Enterobacter agglomerans (Erwinia herbicola).